The following is a 941-amino-acid chain: ATP-dependent 6-phosphofructokinase subunit beta (941 aa).

The N-terminal catalytic PFK domain 1 stretch occupies residues 2–558; the sequence is PDASLFNGTS…HMKNFISTNS (557 aa). ATP-binding positions include Gly-191, 255-256, and 285-288; these read RC and GDGS. Position 286 (Asp-286) interacts with Mg(2+). Beta-D-fructose 6-phosphate contacts are provided by residues 331–333, Arg-368, and 375–377; these read SID and MGR. The active-site Proton acceptor is Asp-333. ATP is bound by residues Ile-395, 400-405, and Gln-410; that span reads KPASSR. Beta-D-fructose 6-phosphate is bound by residues Glu-432, Arg-460, and 466–469; that span reads HVQR. 557 to 558 serves as a coordination point for ATP; it reads NS. An interdomain linker region spans residues 559–572; sequence ADHVPPSLPLEKRK. The tract at residues 573–941 is C-terminal regulatory PFK domain 2; it reads KIAIINVGAP…SDMLSGRTSL (369 aa). Residues Arg-643, 701–705, Arg-739, 746–748, Glu-806, Lys-832, 838–841, and Arg-918 each bind beta-D-fructose 2,6-bisphosphate; these read TISNN, QGG, and HVQQ.

It belongs to the phosphofructokinase type A (PFKA) family. ATP-dependent PFK group I subfamily. Eukaryotic two domain clade 'E' sub-subfamily. In terms of assembly, heterododecamer of 4 alpha, 4 beta and 4 gamma chains. Requires Mg(2+) as cofactor.

It localises to the cytoplasm. It catalyses the reaction beta-D-fructose 6-phosphate + ATP = beta-D-fructose 1,6-bisphosphate + ADP + H(+). The protein operates within carbohydrate degradation; glycolysis; D-glyceraldehyde 3-phosphate and glycerone phosphate from D-glucose: step 3/4. Its activity is regulated as follows. Allosterically activated by ADP, AMP, or fructose 2,6-bisphosphate, and allosterically inhibited by ATP or citrate. Its function is as follows. Catalyzes the phosphorylation of D-fructose 6-phosphate to fructose 1,6-bisphosphate by ATP, the first committing step of glycolysis. This is ATP-dependent 6-phosphofructokinase subunit beta (PFK2) from Komagataella pastoris (Yeast).